Consider the following 603-residue polypeptide: Spastin (603 aa).

The tract at residues 1-34 is disordered; sequence MNSPGGRNNKKKPVTPAAETGPGPPTPPPPPAET. Residues 1 to 54 lie on the Cytoplasmic side of the membrane; the sequence is MNSPGGRNNKKKPVTPAAETGPGPPTPPPPPAETQVLLAPPSLHKRNLYLFSYP. Positions 22-32 are enriched in pro residues; that stretch reads PGPPTPPPPPA. Positions 55–75 form an intramembrane region, helical; sequence LLAAFSLLRFLAFQLGLLFVW. The Cytoplasmic portion of the chain corresponds to 76–603; sequence FCERLSRRVM…WNKEFGDTTV (528 aa). The 76-residue stretch at 113–188 folds into the MIT domain; sequence YHQQAFQYIS…LMAKDRLQLL (76 aa). A disordered region spans residues 216-294; it reads GLLKPEKGAV…RTNKPTTPTT (79 aa). Residues 219 to 231 show a composition bias toward basic and acidic residues; that stretch reads KPEKGAVPKKKDP. Over residues 281–294 the composition is skewed to low complexity; it reads KNNTRTNKPTTPTT. 369–376 serves as a coordination point for ATP; the sequence is GPPGNGKT.

This sequence belongs to the AAA ATPase family. Spastin subfamily. As to quaternary structure, homohexamer. The homohexamer is stabilized by ATP-binding. The homohexamer may adopt a ring conformation through which microtubules pass prior to being severed. Interacts with microtubules.

Its subcellular location is the membrane. The protein localises to the cytoplasm. It is found in the cytoskeleton. It localises to the microtubule organizing center. The protein resides in the centrosome. Its subcellular location is the perinuclear region. The protein localises to the nucleus. It catalyses the reaction n ATP + n H2O + a microtubule = n ADP + n phosphate + (n+1) alpha/beta tubulin heterodimers.. Its function is as follows. ATP-dependent microtubule severing protein that specifically recognizes and cuts microtubules that are polyglutamylated. Preferentially recognizes and acts on microtubules decorated with short polyglutamate tails: severing activity increases as the number of glutamates per tubulin rises from one to eight, but decreases beyond this glutamylation threshold. Microtubule severing promotes reorganization of cellular microtubule arrays and the release of microtubules from the centrosome following nucleation. Required for membrane traffic from the endoplasmic reticulum (ER) to the Golgi and for completion of the abscission stage of cytokinesis. Also plays a role in axon growth and the formation of axonal branches. This Xenopus tropicalis (Western clawed frog) protein is Spastin.